The chain runs to 306 residues: Porphobilinogen deaminase (306 aa).

C239 is modified (S-(dipyrrolylmethanemethyl)cysteine).

It belongs to the HMBS family. As to quaternary structure, monomer. It depends on dipyrromethane as a cofactor.

The catalysed reaction is 4 porphobilinogen + H2O = hydroxymethylbilane + 4 NH4(+). It participates in porphyrin-containing compound metabolism; protoporphyrin-IX biosynthesis; coproporphyrinogen-III from 5-aminolevulinate: step 2/4. Functionally, tetrapolymerization of the monopyrrole PBG into the hydroxymethylbilane pre-uroporphyrinogen in several discrete steps. This chain is Porphobilinogen deaminase, found in Helicobacter acinonychis (strain Sheeba).